A 109-amino-acid polypeptide reads, in one-letter code: Protein phosphatase 1 regulatory subunit 1C (109 aa).

A disordered region spans residues 25–109 (AEQIRKRRPT…TNEREEQRDH (85 aa)). Positions 45–54 (NPPEIDDKRG) are enriched in basic and acidic residues. Residues 55–75 (PNTQGELQNASPKQRKQSVYT) show a composition bias toward polar residues. Residues 100–109 (TNEREEQRDH) are compositionally biased toward basic and acidic residues.

This sequence belongs to the protein phosphatase inhibitor 1 family.

The protein resides in the cytoplasm. Its function is as follows. May increase cell susceptibility to TNF-induced apoptosis. This chain is Protein phosphatase 1 regulatory subunit 1C (PPP1R1C), found in Homo sapiens (Human).